A 93-amino-acid polypeptide reads, in one-letter code: DNA-directed RNA polymerase subunit omega (93 aa).

It belongs to the RNA polymerase subunit omega family. As to quaternary structure, the RNAP catalytic core consists of 2 alpha, 1 beta, 1 beta' and 1 omega subunit. When a sigma factor is associated with the core the holoenzyme is formed, which can initiate transcription.

It catalyses the reaction RNA(n) + a ribonucleoside 5'-triphosphate = RNA(n+1) + diphosphate. In terms of biological role, promotes RNA polymerase assembly. Latches the N- and C-terminal regions of the beta' subunit thereby facilitating its interaction with the beta and alpha subunits. The protein is DNA-directed RNA polymerase subunit omega of Shewanella piezotolerans (strain WP3 / JCM 13877).